The primary structure comprises 238 residues: 2-C-methyl-D-erythritol 4-phosphate cytidylyltransferase (238 aa).

This sequence belongs to the IspD/TarI cytidylyltransferase family. IspD subfamily.

The enzyme catalyses 2-C-methyl-D-erythritol 4-phosphate + CTP + H(+) = 4-CDP-2-C-methyl-D-erythritol + diphosphate. The protein operates within isoprenoid biosynthesis; isopentenyl diphosphate biosynthesis via DXP pathway; isopentenyl diphosphate from 1-deoxy-D-xylulose 5-phosphate: step 2/6. Functionally, catalyzes the formation of 4-diphosphocytidyl-2-C-methyl-D-erythritol from CTP and 2-C-methyl-D-erythritol 4-phosphate (MEP). The sequence is that of 2-C-methyl-D-erythritol 4-phosphate cytidylyltransferase from Acinetobacter baumannii (strain AYE).